Reading from the N-terminus, the 188-residue chain is MLIQILLIGVSVSMDTFAVSIGKGLTVKKLRGLDALKTALWFGGFQALFPLLGYFAASTFSKYVTAVDHWIIFGLLALIGGNMVREAFEEDEENAKETPEFDWKHMLPLAVACSIDAVAVGVSFAFMTLNIWLSVVIIGITTGLFSAAGLYIGRVFGSRWQKPAQIAGGVVLILIGLKVLFEHLGFLG.

A run of 6 helical transmembrane segments spans residues 1-21 (MLIQILLIGVSVSMDTFAVSI), 40-60 (LWFGGFQALFPLLGYFAASTF), 64-84 (VTAVDHWIIFGLLALIGGNMV), 105-127 (HMLPLAVACSIDAVAVGVSFAFM), 131-153 (IWLSVVIIGITTGLFSAAGLYIG), and 166-186 (IAGGVVLILIGLKVLFEHLGF).

It belongs to the MntP (TC 9.B.29) family.

The protein localises to the cell membrane. Functionally, probably functions as a manganese efflux pump. This Bifidobacterium adolescentis (strain ATCC 15703 / DSM 20083 / NCTC 11814 / E194a) protein is Putative manganese efflux pump MntP.